The primary structure comprises 116 residues: Large ribosomal subunit protein bL17 (116 aa).

Belongs to the bacterial ribosomal protein bL17 family. In terms of assembly, part of the 50S ribosomal subunit. Contacts protein L32.

This chain is Large ribosomal subunit protein bL17, found in Synechocystis sp. (strain ATCC 27184 / PCC 6803 / Kazusa).